The sequence spans 610 residues: Elongation factor 4 (610 aa).

Residues 7–189 (SRIRNFSIIA…AIVQRIPPPK (183 aa)) form the tr-type G domain. GTP-binding positions include 19–24 (DHGKST) and 136–139 (NKID).

It belongs to the TRAFAC class translation factor GTPase superfamily. Classic translation factor GTPase family. LepA subfamily.

The protein resides in the cell inner membrane. It catalyses the reaction GTP + H2O = GDP + phosphate + H(+). In terms of biological role, required for accurate and efficient protein synthesis under certain stress conditions. May act as a fidelity factor of the translation reaction, by catalyzing a one-codon backward translocation of tRNAs on improperly translocated ribosomes. Back-translocation proceeds from a post-translocation (POST) complex to a pre-translocation (PRE) complex, thus giving elongation factor G a second chance to translocate the tRNAs correctly. Binds to ribosomes in a GTP-dependent manner. The protein is Elongation factor 4 of Thermus thermophilus (strain ATCC 27634 / DSM 579 / HB8).